The sequence spans 124 residues: Large ribosomal subunit protein bL12 (124 aa).

This sequence belongs to the bacterial ribosomal protein bL12 family. Homodimer. Part of the ribosomal stalk of the 50S ribosomal subunit. Forms a multimeric L10(L12)X complex, where L10 forms an elongated spine to which 2 to 4 L12 dimers bind in a sequential fashion. Binds GTP-bound translation factors.

Forms part of the ribosomal stalk which helps the ribosome interact with GTP-bound translation factors. Is thus essential for accurate translation. The polypeptide is Large ribosomal subunit protein bL12 (Anaeromyxobacter dehalogenans (strain 2CP-C)).